The following is a 551-amino-acid chain: Electron transfer flavoprotein-ubiquinone oxidoreductase (551 aa).

10 to 24 (VVIVGAGPAGLSAAC) contacts FAD. [4Fe-4S] cluster is bound by residues Cys-496, Cys-520, Cys-523, and Cys-526. The 30-residue stretch at 511–540 (KRFQINAQNCVHCKTCDIKDPAQNITWVAP) folds into the 4Fe-4S ferredoxin-type domain.

The protein belongs to the ETF-QO/FixC family. The cofactor is [4Fe-4S] cluster. FAD is required as a cofactor.

The catalysed reaction is a ubiquinone + reduced [electron-transfer flavoprotein] = a ubiquinol + oxidized [electron-transfer flavoprotein] + H(+). Accepts electrons from ETF and reduces ubiquinone. This is Electron transfer flavoprotein-ubiquinone oxidoreductase from Pseudomonas aeruginosa (strain ATCC 15692 / DSM 22644 / CIP 104116 / JCM 14847 / LMG 12228 / 1C / PRS 101 / PAO1).